A 342-amino-acid polypeptide reads, in one-letter code: MAPTLELLAEDYASEEDSDFAPETAEAAGESSISDDDDEEAGEDAEKAKPEKRKRAAIEEAEDAGYDNSGDEAIIKKGEKRQKKTKTKLAADDEETGEGGLIKTRSQRAVEKEKRSTAAASGPVTIDVDALWAQMISEPVIPRTSTAKPDESADPANCDIAKSSSQQPETAKAKDPDSDLIKIKRTYNFAGKVHTEEKLVARDSAEAKLYLASLGENAPADGETAAEDESSSAKRMPRKAFRSVFEPITDANSAHRSDLNLSMASRLQAREATGNKAKKLNTVEKSKMDWAVAVDKMGLKDELELAGKSKDSFAARQDFLARSEMRREEEARRARMAQAGKT.

Disordered regions lie at residues 1-126 (MAPT…PVTI), 142-178 (PRTSTAKPDESADPANCDIAKSSSQQPETAKAKDPDS), and 214-238 (LGENAPADGETAAEDESSSAKRMPR). Composition is skewed to acidic residues over residues 8 to 20 (LAEDYASEEDSDF) and 33 to 43 (ISDDDDEEAGE). Residues 78–87 (GEKRQKKTKT) show a composition bias toward basic residues. Positions 260-341 (NLSMASRLQA…RRARMAQAGK (82 aa)) constitute a BCNT-C domain.

Belongs to the SWC5 family. In terms of assembly, component of the SWR1 chromatin remodeling complex.

It localises to the nucleus. Functionally, component of the SWR1 complex which mediates the ATP-dependent exchange of histone H2A for the H2A variant H2A.Z leading to transcriptional regulation of selected genes by chromatin remodeling. Involved in chromosome stability. The protein is SWR1-complex protein 5 (crc-2) of Neurospora crassa (strain ATCC 24698 / 74-OR23-1A / CBS 708.71 / DSM 1257 / FGSC 987).